A 312-amino-acid polypeptide reads, in one-letter code: Bark storage protein A (312 aa).

The N-terminal stretch at 1–24 (MPQQSMQASLIDPIAEIERSNCKI) is a signal peptide. Residue asparagine 70 is glycosylated (N-linked (GlcNAc...) asparagine).

To wound-inducible poplar endochitinases. Monomer. In terms of tissue distribution, bark.

Functionally, may play a role in nitrogen storage. This is Bark storage protein A (BSPA) from Populus deltoides (Eastern poplar).